Reading from the N-terminus, the 199-residue chain is MTVTTEGRTIEGRPIGARPVPRLKQRYRDEIAPALREQFSYRNVMQIPGVVKVVVNMGVGDAARDAKLIDGAVRDLAAITGQKPAVRRAKKSIAQFKLREGMPIGAKVTLRGDRMWEFLDRLVTIALPRIRDFRGLSPKQFDGAGNYTFGVTEQSIFHEIDIDRIDRVRGMDITVVTTATTDDEGRALLRALGFPFREN.

This sequence belongs to the universal ribosomal protein uL5 family. In terms of assembly, part of the 50S ribosomal subunit; part of the 5S rRNA/L5/L18/L25 subcomplex. Contacts the 5S rRNA and the P site tRNA. Forms a bridge to the 30S subunit in the 70S ribosome.

This is one of the proteins that bind and probably mediate the attachment of the 5S RNA into the large ribosomal subunit, where it forms part of the central protuberance. In the 70S ribosome it contacts protein S13 of the 30S subunit (bridge B1b), connecting the 2 subunits; this bridge is implicated in subunit movement. Contacts the P site tRNA; the 5S rRNA and some of its associated proteins might help stabilize positioning of ribosome-bound tRNAs. This Frankia casuarinae (strain DSM 45818 / CECT 9043 / HFP020203 / CcI3) protein is Large ribosomal subunit protein uL5.